The chain runs to 960 residues: Valine--tRNA ligase (960 aa).

A 'HIGH' region motif is present at residues 42-52 (PNITGNLHMGH). The 'KMSKS' region signature appears at 553-557 (KMSKS). Lys-556 contacts ATP. Positions 879–950 (VLKAIDKEIE…LSQQLESLHD (72 aa)) form a coiled coil.

This sequence belongs to the class-I aminoacyl-tRNA synthetase family. ValS type 1 subfamily. As to quaternary structure, monomer.

It is found in the cytoplasm. The enzyme catalyses tRNA(Val) + L-valine + ATP = L-valyl-tRNA(Val) + AMP + diphosphate. Functionally, catalyzes the attachment of valine to tRNA(Val). As ValRS can inadvertently accommodate and process structurally similar amino acids such as threonine, to avoid such errors, it has a 'posttransfer' editing activity that hydrolyzes mischarged Thr-tRNA(Val) in a tRNA-dependent manner. This chain is Valine--tRNA ligase, found in Buchnera aphidicola subsp. Schizaphis graminum (strain Sg).